The primary structure comprises 420 residues: Glucose-1-phosphate adenylyltransferase (420 aa).

Alpha-D-glucose 1-phosphate-binding positions include Tyr-107, Gly-172, 187–188 (EK), and Ser-205.

Belongs to the bacterial/plant glucose-1-phosphate adenylyltransferase family. As to quaternary structure, homotetramer.

The enzyme catalyses alpha-D-glucose 1-phosphate + ATP + H(+) = ADP-alpha-D-glucose + diphosphate. It participates in glycan biosynthesis; glycogen biosynthesis. Involved in the biosynthesis of ADP-glucose, a building block required for the elongation reactions to produce glycogen. Catalyzes the reaction between ATP and alpha-D-glucose 1-phosphate (G1P) to produce pyrophosphate and ADP-Glc. This Rhodopseudomonas palustris (strain BisB18) protein is Glucose-1-phosphate adenylyltransferase.